The sequence spans 118 residues: MAVSAALVLLGLLSLSGLDAIQRIPEVQVYSRHPPEDGKPNYLNCYVYGFHPPQIEIDLLKNGEKIKSEQSDLSFSKDWSFYLLSHAEFTPNSKDQYSCRVNHVTLTQPKIVKWDRDL.

Positions 1–20 (MAVSAALVLLGLLSLSGLDA) are cleaved as a signal peptide. The Ig-like C1-type domain maps to 25–112 (PEVQVYSRHP…HVTLTQPKIV (88 aa)). Cys45 and Cys99 form a disulfide bridge.

Belongs to the beta-2-microglobulin family. Heterodimer of an alpha chain and a beta chain. Beta-2-microglobulin is the beta-chain of major histocompatibility complex class I molecules.

It is found in the secreted. Its function is as follows. Component of the class I major histocompatibility complex (MHC). Involved in the presentation of peptide antigens to the immune system. The protein is Beta-2-microglobulin (B2M) of Ovis aries (Sheep).